The primary structure comprises 405 residues: Bestrophin homolog 14 (405 aa).

A run of 4 helical transmembrane segments spans residues 28-48 (LIGF…LLDE), 63-83 (IGAQ…LIVA), 223-243 (LVYT…CLIG), and 256-276 (EITI…LGWL).

This sequence belongs to the anion channel-forming bestrophin (TC 1.A.46) family. Calcium-sensitive chloride channel subfamily.

It localises to the membrane. The protein is Bestrophin homolog 14 (best-14) of Caenorhabditis elegans.